The following is a 238-amino-acid chain: Ribonuclease PH (238 aa).

Phosphate contacts are provided by residues R86 and 124–126; that span reads GTR.

It belongs to the RNase PH family. As to quaternary structure, homohexameric ring arranged as a trimer of dimers.

The enzyme catalyses tRNA(n+1) + phosphate = tRNA(n) + a ribonucleoside 5'-diphosphate. In terms of biological role, phosphorolytic 3'-5' exoribonuclease that plays an important role in tRNA 3'-end maturation. Removes nucleotide residues following the 3'-CCA terminus of tRNAs; can also add nucleotides to the ends of RNA molecules by using nucleoside diphosphates as substrates, but this may not be physiologically important. Probably plays a role in initiation of 16S rRNA degradation (leading to ribosome degradation) during starvation. The protein is Ribonuclease PH of Chromobacterium violaceum (strain ATCC 12472 / DSM 30191 / JCM 1249 / CCUG 213 / NBRC 12614 / NCIMB 9131 / NCTC 9757 / MK).